The chain runs to 348 residues: Dihydroorotase (348 aa).

Residues His14 and His16 each contribute to the Zn(2+) site. Residues 16–18 (HLR) and Asn42 contribute to the substrate site. Zn(2+)-binding residues include Lys100, His137, and His175. Residue Lys100 is modified to N6-carboxylysine. A substrate-binding site is contributed by His137. Leu220 is a binding site for substrate. Asp248 is a Zn(2+) binding site. Asp248 is an active-site residue. Positions 252 and 264 each coordinate substrate.

It belongs to the metallo-dependent hydrolases superfamily. DHOase family. Class II DHOase subfamily. As to quaternary structure, homodimer. Zn(2+) is required as a cofactor.

It catalyses the reaction (S)-dihydroorotate + H2O = N-carbamoyl-L-aspartate + H(+). The protein operates within pyrimidine metabolism; UMP biosynthesis via de novo pathway; (S)-dihydroorotate from bicarbonate: step 3/3. Catalyzes the reversible cyclization of carbamoyl aspartate to dihydroorotate. This is Dihydroorotase from Pseudomonas putida (strain W619).